A 156-amino-acid chain; its full sequence is Small ribosomal subunit protein uS7 (156 aa).

It belongs to the universal ribosomal protein uS7 family. As to quaternary structure, part of the 30S ribosomal subunit. Contacts proteins S9 and S11.

In terms of biological role, one of the primary rRNA binding proteins, it binds directly to 16S rRNA where it nucleates assembly of the head domain of the 30S subunit. Is located at the subunit interface close to the decoding center, probably blocks exit of the E-site tRNA. The protein is Small ribosomal subunit protein uS7 of Actinobacillus succinogenes (strain ATCC 55618 / DSM 22257 / CCUG 43843 / 130Z).